Here is a 146-residue protein sequence, read N- to C-terminus: Single-stranded DNA-binding protein, mitochondrial (146 aa).

The transit peptide at M1 to H16 directs the protein to the mitochondrion. Residues I29 to S140 enclose the SSB domain.

The protein resides in the mitochondrion. It localises to the mitochondrion matrix. The protein localises to the mitochondrion nucleoid. In terms of biological role, binds preferentially and cooperatively to pyrimidine rich single-stranded DNA (ss-DNA). May be required to maintain the copy number of mitochondrial DNA (mtDNA) and play a crucial role during mtDNA replication. Required for retinal ganglion cell differentiation and retinal integrity. The protein is Single-stranded DNA-binding protein, mitochondrial of Danio rerio (Zebrafish).